A 389-amino-acid chain; its full sequence is Acetylornithine aminotransferase (389 aa).

Pyridoxal 5'-phosphate contacts are provided by residues 96 to 97 (GT) and Phe-123. N(2)-acetyl-L-ornithine is bound at residue Arg-126. Pyridoxal 5'-phosphate is bound at residue 207 to 210 (DEVQ). Lys-236 is subject to N6-(pyridoxal phosphate)lysine. Ser-264 contacts N(2)-acetyl-L-ornithine. Residue Thr-265 coordinates pyridoxal 5'-phosphate.

This sequence belongs to the class-III pyridoxal-phosphate-dependent aminotransferase family. ArgD subfamily. Homodimer. Pyridoxal 5'-phosphate is required as a cofactor.

It is found in the cytoplasm. The catalysed reaction is N(2)-acetyl-L-ornithine + 2-oxoglutarate = N-acetyl-L-glutamate 5-semialdehyde + L-glutamate. It functions in the pathway amino-acid biosynthesis; L-arginine biosynthesis; N(2)-acetyl-L-ornithine from L-glutamate: step 4/4. The protein is Acetylornithine aminotransferase of Lactiplantibacillus plantarum (strain ATCC BAA-793 / NCIMB 8826 / WCFS1) (Lactobacillus plantarum).